Here is a 195-residue protein sequence, read N- to C-terminus: uncharacterized protein (195 aa).

The signal sequence occupies residues 1–17 (MKASLITAFVLPLLALA). Asn75 is a glycosylation site (N-linked (GlcNAc...) asparagine).

It is found in the secreted. This is an uncharacterized protein from Arthroderma benhamiae (strain ATCC MYA-4681 / CBS 112371) (Trichophyton mentagrophytes).